The primary structure comprises 111 residues: Shuttling pre-60S factor C23B6.02c (111 aa).

Basic residues-rich tracts occupy residues 1–12 (MAKKQSIRSRNF) and 59–73 (SKKKKNKKQTSKKAK). Disordered stretches follow at residues 1 to 25 (MAKKQSIRSRNFRRSDPAYDLDSST) and 47 to 111 (ALRS…QGDE). Positions 83 to 111 (QAREERLDTKISKSLQKQEKLKARKQGDE) are enriched in basic and acidic residues.

The protein belongs to the ECM1 family. Associates with the pre-60S ribosomal particle and the nucleopore complex.

It localises to the nucleus. The protein localises to the nucleolus. It is found in the cytoplasm. Its function is as follows. Pre-ribosomal factor involved in 60S ribosomal protein subunit export from the nucleus. The sequence is that of Shuttling pre-60S factor C23B6.02c from Schizosaccharomyces pombe (strain 972 / ATCC 24843) (Fission yeast).